The primary structure comprises 507 residues: Cytochrome P450 71A4 (507 aa).

A helical membrane pass occupies residues 3–23 (VPCLWYSLLILLLLFIFLLIH). Cys448 lines the heme pocket.

The protein belongs to the cytochrome P450 family. Heme is required as a cofactor.

Its subcellular location is the membrane. In terms of biological role, may have a role in maturation, such as during flavor formation or other metabolite production specific to aging tissues. This Solanum melongena (Eggplant) protein is Cytochrome P450 71A4 (CYP71A4).